The sequence spans 100 residues: Large ribosomal subunit protein eL31 (100 aa).

This sequence belongs to the eukaryotic ribosomal protein eL31 family.

The protein is Large ribosomal subunit protein eL31 of Hyperthermus butylicus (strain DSM 5456 / JCM 9403 / PLM1-5).